The primary structure comprises 404 residues: DNA gyrase subunit B (404 aa).

Residues 321–404 (SEIYIVEGDS…VIIMTDADVD (84 aa)) form the Toprim domain. Mg(2+)-binding residues include glutamate 327, aspartate 400, and aspartate 402.

The protein belongs to the type II topoisomerase GyrB family. As to quaternary structure, heterotetramer, composed of two GyrA and two GyrB chains. In the heterotetramer, GyrA contains the active site tyrosine that forms a transient covalent intermediate with DNA, while GyrB binds cofactors and catalyzes ATP hydrolysis. Requires Mg(2+) as cofactor. Mn(2+) serves as cofactor. It depends on Ca(2+) as a cofactor.

Its subcellular location is the cytoplasm. The enzyme catalyses ATP-dependent breakage, passage and rejoining of double-stranded DNA.. In terms of biological role, a type II topoisomerase that negatively supercoils closed circular double-stranded (ds) DNA in an ATP-dependent manner to modulate DNA topology and maintain chromosomes in an underwound state. Negative supercoiling favors strand separation, and DNA replication, transcription, recombination and repair, all of which involve strand separation. Also able to catalyze the interconversion of other topological isomers of dsDNA rings, including catenanes and knotted rings. Type II topoisomerases break and join 2 DNA strands simultaneously in an ATP-dependent manner. In Bacillus cereus, this protein is DNA gyrase subunit B (gyrB).